Consider the following 292-residue polypeptide: MNGIINLRKEAGMTSHDAVFKLRKILKTKKIGHGGTLDPDVVGVLPIAVGKATRLVEFMQEEGKVYEGEITLGCSTTTEDASGDILDRTPVTELLEEALIDEAMESMTGEIRQIPPMYSAVKVNGRKLYEYARAGQEVERPERQVTIYSFKRTSPISYEDEQARFRFRVKCSKGTYVRTLSVDLGAKLGFASHMSQLTRTFSAGMSLDDALTLDEIAERVAVDDFSFLQPLELGIGDLVRVELSDEQVEDVRNGRFISLMSEEAELAGFYKEKLIAILEKREEAYKPRKVFL.

D38 (nucleophile) is an active-site residue.

Belongs to the pseudouridine synthase TruB family. Type 1 subfamily.

The catalysed reaction is uridine(55) in tRNA = pseudouridine(55) in tRNA. In terms of biological role, responsible for synthesis of pseudouridine from uracil-55 in the psi GC loop of transfer RNAs. This Streptococcus sanguinis (strain SK36) protein is tRNA pseudouridine synthase B.